The sequence spans 310 residues: MTKDIQVKKLLHPRNLHRGHYDLKQLCEQSPLLSTFLRTNPKGEQTLDFAEPQAVLLLNQVLLKQFYHVDFWQIPKGYLCPPIPGRVDYIHYLADLLGDTFHGKIPEGKQVKVLDIGTGANCIYPILGSQSYGWSFVGTDIDPLSVKMAGLIIKSNVSLKPFIKVQLQANKQAIFAGIIKPKDKFTLTMCNPPFHASMEKALAGSARKIKNLSNDQNNLSRVLNFAGQEGELCCAGGEIRFLKQMIQESKDYARQVCWFTSLVSKSDNIAPLKQQLEKVGAEHVKVIKMAQGQKVSRFIAWSFLPQPQNF.

Belongs to the methyltransferase superfamily. METTL16/RlmF family.

It is found in the cytoplasm. The catalysed reaction is adenosine(1618) in 23S rRNA + S-adenosyl-L-methionine = N(6)-methyladenosine(1618) in 23S rRNA + S-adenosyl-L-homocysteine + H(+). In terms of biological role, specifically methylates the adenine in position 1618 of 23S rRNA. The polypeptide is Ribosomal RNA large subunit methyltransferase F (Psychromonas ingrahamii (strain DSM 17664 / CCUG 51855 / 37)).